A 199-amino-acid chain; its full sequence is Chaperone protein TorD (199 aa).

The protein belongs to the TorD/DmsD family. TorD subfamily.

Its subcellular location is the cytoplasm. Involved in the biogenesis of TorA. Acts on TorA before the insertion of the molybdenum cofactor and, as a result, probably favors a conformation of the apoenzyme that is competent for acquiring the cofactor. The polypeptide is Chaperone protein TorD (Escherichia coli O157:H7 (strain EC4115 / EHEC)).